Consider the following 428-residue polypeptide: Transcription factor Sp7 (428 aa).

Residues 30–84 (SSPLRDSTTLGKGGTKKPYADLSAPKTMGDAYPAPFSSTNGLLSPAGSPPAPASG) form a disordered region. An N6-propionyllysine mark is found at Lys41 and Lys45. Lys55 participates in a covalent cross-link: Glycyl lysine isopeptide (Lys-Gly) (interchain with G-Cter in ubiquitin). The 9aaTAD signature appears at 153–161 (TPWWDMHPG). Lys227 is covalently cross-linked (Glycyl lysine isopeptide (Lys-Gly) (interchain with G-Cter in ubiquitin)). The segment at 229 to 257 (KAVGNSGQLEGSGAAKPPRGAGTGGSGGY) is disordered. 3 consecutive C2H2-type zinc fingers follow at residues 291–315 (HSCH…LRWH), 321–345 (FVCN…VRTH), and 351–373 (FTCL…QRTH). Residues Lys358 and Lys368 each carry the N6-propionyllysine modification. Residues 364–428 (DHLSKHQRTH…SPEQSNLLEI (65 aa)) form a disordered region.

Belongs to the Sp1 C2H2-type zinc-finger protein family. Interacts with RIOX1; the interaction is direct and inhibits transcription activator activity. In terms of processing, propionylated. Depropionylation at Lys-368 by SIRT7 activates transcription factor activity and positively regulates bone formation by osteoblasts. Post-translationally, ubiquitination at leads to proteasomal degradation. SP7 is a short-live protein with an endogenous half-life of approximately 12 hours. In terms of tissue distribution, osteoblast/chondrocyte specific.

The protein resides in the nucleus. Functionally, transcriptional activator essential for osteoblast differentiation. Binds to SP1 and EKLF consensus sequences and to other G/C-rich sequences. The sequence is that of Transcription factor Sp7 (Sp7) from Mus musculus (Mouse).